The primary structure comprises 306 residues: Dermonecrotic toxin LarSicTox-alphaIB1ai (306 aa).

Residue valine 1 is a signal peptide. The propeptide occupies 2-27 (RATEKFASMYFFCHSPQSAETDVAER). Histidine 38 is an active-site residue. Positions 58 and 60 each coordinate Mg(2+). The active-site Nucleophile is the histidine 74. Disulfide bonds link cysteine 78-cysteine 84 and cysteine 80-cysteine 223. Residue aspartate 118 coordinates Mg(2+). The N-linked (GlcNAc...) asparagine glycan is linked to asparagine 283.

This sequence belongs to the arthropod phospholipase D family. Class II subfamily. Requires Mg(2+) as cofactor. Expressed by the venom gland.

The protein localises to the secreted. It catalyses the reaction an N-(acyl)-sphingosylphosphocholine = an N-(acyl)-sphingosyl-1,3-cyclic phosphate + choline. It carries out the reaction an N-(acyl)-sphingosylphosphoethanolamine = an N-(acyl)-sphingosyl-1,3-cyclic phosphate + ethanolamine. The enzyme catalyses a 1-acyl-sn-glycero-3-phosphocholine = a 1-acyl-sn-glycero-2,3-cyclic phosphate + choline. The catalysed reaction is a 1-acyl-sn-glycero-3-phosphoethanolamine = a 1-acyl-sn-glycero-2,3-cyclic phosphate + ethanolamine. Dermonecrotic toxins cleave the phosphodiester linkage between the phosphate and headgroup of certain phospholipids (sphingolipid and lysolipid substrates), forming an alcohol (often choline) and a cyclic phosphate. This toxin acts on sphingomyelin (SM). It may also act on ceramide phosphoethanolamine (CPE), lysophosphatidylcholine (LPC) and lysophosphatidylethanolamine (LPE), but not on lysophosphatidylserine (LPS), and lysophosphatidylglycerol (LPG). It acts by transphosphatidylation, releasing exclusively cyclic phosphate products as second products. Induces dermonecrosis, hemolysis, increased vascular permeability, edema, inflammatory response, and platelet aggregation. The polypeptide is Dermonecrotic toxin LarSicTox-alphaIB1ai (Loxosceles arizonica (Arizona brown spider)).